A 123-amino-acid polypeptide reads, in one-letter code: Putative acidic leucine-rich nuclear phosphoprotein 32 family member C (123 aa).

4 LRR repeats span residues 43-64 (ELEF…PKLN), 65-87 (KLKK…AEKC), 89-110 (NLKH…ELLK), and 114-123 (NLKSLDLFNC).

It belongs to the ANP32 family.

The protein is Putative acidic leucine-rich nuclear phosphoprotein 32 family member C (Anp32c) of Mus musculus (Mouse).